A 144-amino-acid chain; its full sequence is Large ribosomal subunit protein uL22 (144 aa).

The segment covering 124-137 (RLKKRVLGQNKRKQ) has biased composition (basic residues). The interval 124 to 144 (RLKKRVLGQNKRKQSVSGEKK) is disordered.

This sequence belongs to the universal ribosomal protein uL22 family. As to quaternary structure, part of the 50S ribosomal subunit.

Its function is as follows. This protein binds specifically to 23S rRNA; its binding is stimulated by other ribosomal proteins, e.g. L4, L17, and L20. It is important during the early stages of 50S assembly. It makes multiple contacts with different domains of the 23S rRNA in the assembled 50S subunit and ribosome. The globular domain of the protein is located near the polypeptide exit tunnel on the outside of the subunit, while an extended beta-hairpin is found that lines the wall of the exit tunnel in the center of the 70S ribosome. This chain is Large ribosomal subunit protein uL22, found in Mycoplasmoides gallisepticum (strain R(low / passage 15 / clone 2)) (Mycoplasma gallisepticum).